The sequence spans 27 residues: Phospholipase A2 P-elapitoxin-Aa1a alpha chain (27 aa).

It belongs to the phospholipase A2 family. Group I subfamily. As to quaternary structure, heterotrimer of alpha, beta and gamma chains, each related to PLA2. Requires Ca(2+) as cofactor. In terms of tissue distribution, expressed by the venom gland.

It localises to the secreted. It carries out the reaction a 1,2-diacyl-sn-glycero-3-phosphocholine + H2O = a 1-acyl-sn-glycero-3-phosphocholine + a fatty acid + H(+). Functionally, heterotrimer: presynaptic neurotoxin. Inhibits nerve-evoked twitch contractions but not responses to cholinergic agonists acetylcholine and carbachol and to depolarizing agonist KCl. Causes a fade in tetanic contractions. Displays a triphasic mode of action with depression, enhancement and blockade of neurotransmission. Does not display myotoxic activity such as changes in baseline muscle tension or inhibition of directly stimulated muscle twitches. All subunits are necessary for maximum toxicity. Monomer: Snake venom phospholipase A2 (PLA2) alpha chain that has enzymatic activity. PLA2 catalyzes the calcium-dependent hydrolysis of the 2-acyl groups in 3-sn-phosphoglycerides. The protein is Phospholipase A2 P-elapitoxin-Aa1a alpha chain of Acanthophis antarcticus (Common death adder).